The sequence spans 219 residues: Elongation factor Ts (219 aa).

Residues 83 to 86 (TDFV) form an involved in Mg(2+) ion dislocation from EF-Tu region.

This sequence belongs to the EF-Ts family.

It localises to the cytoplasm. Associates with the EF-Tu.GDP complex and induces the exchange of GDP to GTP. It remains bound to the aminoacyl-tRNA.EF-Tu.GTP complex up to the GTP hydrolysis stage on the ribosome. In Synechococcus sp. (strain WH7803), this protein is Elongation factor Ts.